Reading from the N-terminus, the 164-residue chain is Putative 4-hydroxy-4-methyl-2-oxoglutarate aldolase (164 aa).

Substrate is bound by residues 75–78 (GDLI) and Arg97. A divalent metal cation is bound at residue Asp98.

Belongs to the class II aldolase/RraA-like family. Homotrimer. A divalent metal cation is required as a cofactor.

The enzyme catalyses 4-hydroxy-4-methyl-2-oxoglutarate = 2 pyruvate. It catalyses the reaction oxaloacetate + H(+) = pyruvate + CO2. Functionally, catalyzes the aldol cleavage of 4-hydroxy-4-methyl-2-oxoglutarate (HMG) into 2 molecules of pyruvate. Also contains a secondary oxaloacetate (OAA) decarboxylase activity due to the common pyruvate enolate transition state formed following C-C bond cleavage in the retro-aldol and decarboxylation reactions. This Shewanella oneidensis (strain ATCC 700550 / JCM 31522 / CIP 106686 / LMG 19005 / NCIMB 14063 / MR-1) protein is Putative 4-hydroxy-4-methyl-2-oxoglutarate aldolase.